Reading from the N-terminus, the 189-residue chain is UPF0312 protein VPA0850 (189 aa).

The N-terminal stretch at Met1–Ala22 is a signal peptide.

It belongs to the UPF0312 family. Type 1 subfamily.

The protein localises to the periplasm. This chain is UPF0312 protein VPA0850, found in Vibrio parahaemolyticus serotype O3:K6 (strain RIMD 2210633).